The primary structure comprises 161 residues: Urease accessory protein UreE (161 aa).

The interval 138-161 (RGAYHAHGGHSHDHGQGHHHHDHG) is disordered.

The protein belongs to the UreE family.

It localises to the cytoplasm. Its function is as follows. Involved in urease metallocenter assembly. Binds nickel. Probably functions as a nickel donor during metallocenter assembly. In Agrobacterium fabrum (strain C58 / ATCC 33970) (Agrobacterium tumefaciens (strain C58)), this protein is Urease accessory protein UreE.